The primary structure comprises 333 residues: D-fructose 1,6-bisphosphatase class 2/sedoheptulose 1,7-bisphosphatase (333 aa).

The Mn(2+) site is built by Asp-33, Glu-57, Asp-85, and Glu-88. Substrate contacts are provided by residues 88–90, Tyr-119, 164–166, and 186–188; these read EGT, RTR, and DGD. Residue Glu-213 participates in Mn(2+) binding.

It belongs to the FBPase class 2 family. Homotetramer. Requires Mn(2+) as cofactor.

The catalysed reaction is beta-D-fructose 1,6-bisphosphate + H2O = beta-D-fructose 6-phosphate + phosphate. The enzyme catalyses D-sedoheptulose 1,7-bisphosphate + H2O = D-sedoheptulose 7-phosphate + phosphate. It functions in the pathway carbohydrate biosynthesis; Calvin cycle. Its function is as follows. Catalyzes the hydrolysis of fructose 1,6-bisphosphate (Fru 1,6-P2) and sedoheptulose 1,7-bisphosphate (Sed 1,7-P2) to fructose 6-phosphate and sedoheptulose 7-phosphate, respectively. This chain is D-fructose 1,6-bisphosphatase class 2/sedoheptulose 1,7-bisphosphatase, found in Prochlorococcus marinus (strain MIT 9312).